The following is a 355-amino-acid chain: Methylthioribose-1-phosphate isomerase (355 aa).

Substrate is bound by residues 53 to 55 (RGA), Arg-96, and Gln-205. Residue Asp-246 is the Proton donor of the active site. Residue 256–257 (NK) coordinates substrate.

The protein belongs to the eIF-2B alpha/beta/delta subunits family. MtnA subfamily.

It carries out the reaction 5-(methylsulfanyl)-alpha-D-ribose 1-phosphate = 5-(methylsulfanyl)-D-ribulose 1-phosphate. The protein operates within amino-acid biosynthesis; L-methionine biosynthesis via salvage pathway; L-methionine from S-methyl-5-thio-alpha-D-ribose 1-phosphate: step 1/6. Its function is as follows. Catalyzes the interconversion of methylthioribose-1-phosphate (MTR-1-P) into methylthioribulose-1-phosphate (MTRu-1-P). The protein is Methylthioribose-1-phosphate isomerase of Thermosynechococcus vestitus (strain NIES-2133 / IAM M-273 / BP-1).